A 184-amino-acid chain; its full sequence is Protein N-terminal glutamine amidohydrolase (184 aa).

Active-site residues include C14, H63, and D78.

It belongs to the NTAQ1 family. In terms of assembly, monomer.

It catalyses the reaction N-terminal L-glutaminyl-[protein] + H2O = N-terminal L-glutamyl-[protein] + NH4(+). Functionally, mediates the side-chain deamidation of N-terminal glutamine residues to glutamate, an important step in N-end rule pathway of protein degradation. Conversion of the resulting N-terminal glutamine to glutamate renders the protein susceptible to arginylation, polyubiquitination and degradation as specified by the N-end rule. Does not act on substrates with internal or C-terminal glutamine and does not act on non-glutamine residues in any position. This Caenorhabditis elegans protein is Protein N-terminal glutamine amidohydrolase.